The primary structure comprises 1403 residues: Centrosomal protein of 162 kDa (1403 aa).

Positions 19–44 (ELSDDSFENSNETPSQPNKDRKKKDT) are disordered. The segment covering 26-35 (ENSNETPSQP) has biased composition (polar residues). Phosphoserine occurs at positions 156 and 159. Disordered stretches follow at residues 171-235 (NVEP…EKTG), 305-342 (DTGE…TTES), and 449-586 (NPSL…SDDS). Residues 176–189 (EGGRENESEHKELP) are compositionally biased toward basic and acidic residues. A compositionally biased stretch (acidic residues) spans 192–204 (YSDDFEDAEDTDE). Residues 206 to 220 (LITKDEETRPKENPE) show a composition bias toward basic and acidic residues. Polar residues predominate over residues 449–466 (NPSLLPQDNKANQTSRSR). The residue at position 468 (S468) is a Phosphoserine. Positions 481-496 (PCKKARSAPPLPRRKP) are enriched in basic residues. Residues 504-517 (ARSSGYSKPSSPLQ) are compositionally biased toward polar residues. Composition is skewed to basic and acidic residues over residues 522–532 (LEKKTSKDNTK) and 567–581 (PHRE…RPED). 3 coiled-coil regions span residues 610 to 1120 (KRAQ…MLSR), 1170 to 1205 (EVLE…QLES), and 1234 to 1385 (CQNA…LHRQ).

Belongs to the CEP162 family. Interacts with alpha-tubulin. Interacts with CPNE4. Interacts with CEP290.

It is found in the cytoplasm. Its subcellular location is the cytoskeleton. The protein resides in the microtubule organizing center. The protein localises to the centrosome. It localises to the centriole. It is found in the spindle. Its subcellular location is the nucleus. Required to promote assembly of the transition zone in primary cilia. Acts by specifically recognizing and binding the axonemal microtubule. Localizes to the distal ends of centrioles before ciliogenesis and directly binds to axonemal microtubule, thereby promoting and restricting transition zone formation specifically at the cilia base. Required to mediate CEP290 association with microtubules. The protein is Centrosomal protein of 162 kDa (Cep162) of Rattus norvegicus (Rat).